We begin with the raw amino-acid sequence, 557 residues long: MESERSKRMGNACIPLKRIAYFLCLLSALLLTEGKKPAKPKCPAVCTCTKDNALCENARSIPRTVPPDVISLSFVRSGFTEISEGGFLFTPSLQLLLFTSNSFDVISDDAFIGLPHLEYLFIENNNIKSISRHTFRGLKSLIHLSLANNNLQTLPKDIFKGLDSLTNVDLRGNSFNCDCKLKWLVEWLGHTNATVEDIYCEGPPEYKKRKINSLSSKDFDCIITEFAKSQDLPYQSLSIDTFSYLNDEYVVIAQPFTGKCIFLEWDHVEKTFRNYDNITGTSTVVCKPIVIETQLYVIVAQLFGGSHIYKRDSFANKFIKIQDIEILKIRKPNDIETFKIENNWYFVVADSSKAGFTTIYKWNGNGFYSHQSLHAWYRDTDVEYLEIVRTPQTLRTPHLILSSSSQRPVIYQWNKATQLFTNQTDIPNMEDVYAVKHFSVKGDVYICLTRFIGDSKVMKWGGSSFQDIQRMPSRGSMVFQPLQINNYQYAILGSDYSFTQVYNWDAEKAKFVKFQELNVQAPRSFTHVSINKRNFLFASSFKGNTQICKHVIVDLSA.

The signal sequence occupies residues 1 to 34 (MESERSKRMGNACIPLKRIAYFLCLLSALLLTEG). The 38-residue stretch at 35 to 72 (KKPAKPKCPAVCTCTKDNALCENARSIPRTVPPDVISL) folds into the LRRNT domain. 3 LRR repeats span residues 92–113 (SLQLLLFTSNSFDVISDDAFIG), 116–137 (HLEYLFIENNNIKSISRHTFRG), and 140–161 (SLIHLSLANNNLQTLPKDIFKG). One can recognise an LRRCT domain in the interval 173–223 (NSFNCDCKLKWLVEWLGHTNATVEDIYCEGPPEYKKRKINSLSSKDFDCII). A glycan (N-linked (GlcNAc...) asparagine) is linked at Asn-192. EAR repeat units lie at residues 225–267 (EFAK…EWDH), 271–313 (TFRN…KRDS), 317–364 (KFIK…KWNG), 366–415 (GFYS…QWNK), 419–462 (LFTN…KWGG), 464–506 (SFQD…NWDA), and 510–552 (KFVK…KHVI). Residue Asn-277 is glycosylated (N-linked (GlcNAc...) asparagine). A glycan (N-linked (GlcNAc...) asparagine) is linked at Asn-422.

As to quaternary structure, oligomer. Interacts with KCNA1 within a complex containing KCNA1, KCNA4 and KCNAB1. Part of a complex containing ADAM22, DLG4/PSD95 and CACNG2 (stargazin). Can bind to ADAM11 and ADAM23. Glycosylated.

The protein resides in the secreted. The protein localises to the synapse. It localises to the cytoplasm. Its function is as follows. Regulates voltage-gated potassium channels assembled from KCNA1, KCNA4 and KCNAB1. It slows down channel inactivation by precluding channel closure mediated by the KCNAB1 subunit. Ligand for ADAM22 that positively regulates synaptic transmission mediated by AMPA-type glutamate receptors. Plays a role in suppressing the production of MMP1/3 through the phosphatidylinositol 3-kinase/ERK pathway. This is Leucine-rich glioma-inactivated protein 1 (LGI1) from Pongo abelii (Sumatran orangutan).